The following is a 101-amino-acid chain: Replication restart protein PriB (101 aa).

Residues 1–101 (MTTNNLVLAG…LHAENVELKT (101 aa)) enclose the SSB domain.

It belongs to the PriB family. As to quaternary structure, homodimer. Interacts with PriA and DnaT. Component of the replication restart primosome. Primosome assembly occurs via a 'hand-off' mechanism. PriA binds to replication forks, subsequently PriB then DnaT bind; DnaT then displaces ssDNA to generate the helicase loading substrate.

Functionally, involved in the restart of stalled replication forks, which reloads the replicative helicase on sites other than the origin of replication; the PriA-PriB pathway is the major replication restart pathway. During primosome assembly it facilitates complex formation between PriA and DnaT on DNA; stabilizes PriA on DNA. Stimulates the DNA unwinding activity of PriA helicase. This is Replication restart protein PriB from Shewanella halifaxensis (strain HAW-EB4).